A 386-amino-acid polypeptide reads, in one-letter code: tRNA N6-adenosine threonylcarbamoyltransferase (386 aa).

Positions 112 and 116 each coordinate Fe cation. Substrate contacts are provided by residues 134–138 (LASGG), Asp167, Gly180, and Asn322. Asp350 is a binding site for Fe cation.

It belongs to the KAE1 / TsaD family. Fe(2+) is required as a cofactor.

It localises to the cytoplasm. The enzyme catalyses L-threonylcarbamoyladenylate + adenosine(37) in tRNA = N(6)-L-threonylcarbamoyladenosine(37) in tRNA + AMP + H(+). In terms of biological role, required for the formation of a threonylcarbamoyl group on adenosine at position 37 (t(6)A37) in tRNAs that read codons beginning with adenine. Is involved in the transfer of the threonylcarbamoyl moiety of threonylcarbamoyl-AMP (TC-AMP) to the N6 group of A37, together with TsaE and TsaB. TsaD likely plays a direct catalytic role in this reaction. The sequence is that of tRNA N6-adenosine threonylcarbamoyltransferase from Rickettsia akari (strain Hartford).